The chain runs to 291 residues: 33 kDa chaperonin (291 aa).

Cystine bridges form between C229–C231 and C262–C265.

The protein belongs to the HSP33 family. In terms of processing, under oxidizing conditions two disulfide bonds are formed involving the reactive cysteines. Under reducing conditions zinc is bound to the reactive cysteines and the protein is inactive.

The protein resides in the cytoplasm. Redox regulated molecular chaperone. Protects both thermally unfolding and oxidatively damaged proteins from irreversible aggregation. Plays an important role in the bacterial defense system toward oxidative stress. In Vibrio parahaemolyticus serotype O3:K6 (strain RIMD 2210633), this protein is 33 kDa chaperonin.